A 771-amino-acid polypeptide reads, in one-letter code: Ribonucleoside-diphosphate reductase large subunit (771 aa).

In terms of domain architecture, ATP-cone spans 1–92 (MFVIKRNGYK…VSNLHKETKK (92 aa)). ATP-binding positions include 5–6 (KR), 11–17 (ENVMFDK), Thr53, Asp57, and Lys88. GDP contacts are provided by Ser202 and Ser217. DTTP contacts are provided by residues 226–228 (DSI), Lys243, and Arg256. Asn427 is a binding site for GDP. Asn427 (proton acceptor) is an active-site residue. The Cysteine radical intermediate role is filled by Cys429. Residues Glu431 and 603–606 (TAST) each bind GDP. Glu431 (proton acceptor) is an active-site residue.

This sequence belongs to the ribonucleoside diphosphate reductase large chain family. Interacts with RNR2/OPG047 subunit. It depends on Mg(2+) as a cofactor.

It catalyses the reaction a 2'-deoxyribonucleoside 5'-diphosphate + [thioredoxin]-disulfide + H2O = a ribonucleoside 5'-diphosphate + [thioredoxin]-dithiol. In terms of biological role, ribonucleoside-diphosphate reductase holoenzyme provides the precursors necessary for viral DNA synthesis. Allows virus growth in non-dividing cells. Catalyzes the biosynthesis of deoxyribonucleotides from the corresponding ribonucleotides. This is Ribonucleoside-diphosphate reductase large subunit (OPG080) from Homo sapiens (Human).